The chain runs to 248 residues: Small ribosomal subunit protein uS3 (248 aa).

The KH type-2 domain occupies I38 to K106. A compositionally biased stretch (basic and acidic residues) spans S214–R229. The interval S214–G248 is disordered. Over residues E230–A242 the composition is skewed to basic residues.

This sequence belongs to the universal ribosomal protein uS3 family. Part of the 30S ribosomal subunit. Forms a tight complex with proteins S10 and S14.

Its function is as follows. Binds the lower part of the 30S subunit head. Binds mRNA in the 70S ribosome, positioning it for translation. The polypeptide is Small ribosomal subunit protein uS3 (Corynebacterium urealyticum (strain ATCC 43042 / DSM 7109)).